The sequence spans 127 residues: MDTMGRHVIAELWGCDVDKLNDLSFIEQVFVDAALKAGAEVREVAFHKFAPQGISGVVIISESHLTIHSFPEHGYASIDVYTCGDRIDPNVASNYIAEALKATATEVVELPRGMGPIQLEKPKVKVL.

The active-site Schiff-base intermediate with substrate; via pyruvic acid is the Ser63. Ser63 bears the Pyruvic acid (Ser); by autocatalysis mark. His68 (proton acceptor; for processing activity) is an active-site residue. The active-site Proton donor; for catalytic activity is the Cys83.

The protein belongs to the prokaryotic AdoMetDC family. Type 1 subfamily. As to quaternary structure, heterotetramer of two alpha and two beta chains arranged as a dimer of alpha/beta heterodimers. It depends on pyruvate as a cofactor. Post-translationally, is synthesized initially as an inactive proenzyme. Formation of the active enzyme involves a self-maturation process in which the active site pyruvoyl group is generated from an internal serine residue via an autocatalytic post-translational modification. Two non-identical subunits are generated from the proenzyme in this reaction, and the pyruvate is formed at the N-terminus of the alpha chain, which is derived from the carboxyl end of the proenzyme. The post-translation cleavage follows an unusual pathway, termed non-hydrolytic serinolysis, in which the side chain hydroxyl group of the serine supplies its oxygen atom to form the C-terminus of the beta chain, while the remainder of the serine residue undergoes an oxidative deamination to produce ammonia and the pyruvoyl group blocking the N-terminus of the alpha chain.

The catalysed reaction is S-adenosyl-L-methionine + H(+) = S-adenosyl 3-(methylsulfanyl)propylamine + CO2. It participates in amine and polyamine biosynthesis; S-adenosylmethioninamine biosynthesis; S-adenosylmethioninamine from S-adenosyl-L-methionine: step 1/1. Catalyzes the decarboxylation of S-adenosylmethionine to S-adenosylmethioninamine (dcAdoMet), the propylamine donor required for the synthesis of the polyamines spermine and spermidine from the diamine putrescine. The sequence is that of S-adenosylmethionine decarboxylase proenzyme 2 from Halalkalibacterium halodurans (strain ATCC BAA-125 / DSM 18197 / FERM 7344 / JCM 9153 / C-125) (Bacillus halodurans).